A 121-amino-acid polypeptide reads, in one-letter code: NAD(P)H-quinone oxidoreductase subunit 3, chloroplastic (121 aa).

3 helical membrane passes run 10–30, 65–85, and 90–110; these read FFIF…ISKF, MFAL…PWAM, and LGLS…IGLV.

This sequence belongs to the complex I subunit 3 family. In terms of assembly, NDH is composed of at least 16 different subunits, 5 of which are encoded in the nucleus.

It is found in the plastid. The protein localises to the chloroplast thylakoid membrane. It carries out the reaction a plastoquinone + NADH + (n+1) H(+)(in) = a plastoquinol + NAD(+) + n H(+)(out). The enzyme catalyses a plastoquinone + NADPH + (n+1) H(+)(in) = a plastoquinol + NADP(+) + n H(+)(out). In terms of biological role, NDH shuttles electrons from NAD(P)H:plastoquinone, via FMN and iron-sulfur (Fe-S) centers, to quinones in the photosynthetic chain and possibly in a chloroplast respiratory chain. The immediate electron acceptor for the enzyme in this species is believed to be plastoquinone. Couples the redox reaction to proton translocation, and thus conserves the redox energy in a proton gradient. This is NAD(P)H-quinone oxidoreductase subunit 3, chloroplastic from Physcomitrium patens (Spreading-leaved earth moss).